The chain runs to 358 residues: Probable aminomethyltransferase (358 aa).

The protein belongs to the GcvT family. The glycine cleavage system is composed of four proteins: P, T, L and H.

It catalyses the reaction N(6)-[(R)-S(8)-aminomethyldihydrolipoyl]-L-lysyl-[protein] + (6S)-5,6,7,8-tetrahydrofolate = N(6)-[(R)-dihydrolipoyl]-L-lysyl-[protein] + (6R)-5,10-methylene-5,6,7,8-tetrahydrofolate + NH4(+). The glycine cleavage system catalyzes the degradation of glycine. The polypeptide is Probable aminomethyltransferase (Natronomonas pharaonis (strain ATCC 35678 / DSM 2160 / CIP 103997 / JCM 8858 / NBRC 14720 / NCIMB 2260 / Gabara) (Halobacterium pharaonis)).